The primary structure comprises 307 residues: GTPase Era (307 aa).

Residues 7-181 (RCGWVALLGP…VKLVKSKLPV (175 aa)) form the Era-type G domain. Residues 15-22 (GPPNAGKS) are G1. 15–22 (GPPNAGKS) contributes to the GTP binding site. The interval 41-45 (QTTRN) is G2. Residues 62-65 (DTPG) are G3. GTP contacts are provided by residues 62-66 (DTPGI) and 130-133 (NKVD). The interval 130–133 (NKVD) is G4. Residues 160–162 (VSA) are G5. The region spanning 212–290 (LRQELPYSVA…HLELWVKVRE (79 aa)) is the KH type-2 domain.

This sequence belongs to the TRAFAC class TrmE-Era-EngA-EngB-Septin-like GTPase superfamily. Era GTPase family. In terms of assembly, monomer.

The protein resides in the cytoplasm. The protein localises to the cell inner membrane. Its function is as follows. An essential GTPase that binds both GDP and GTP, with rapid nucleotide exchange. Plays a role in 16S rRNA processing and 30S ribosomal subunit biogenesis and possibly also in cell cycle regulation and energy metabolism. The polypeptide is GTPase Era (Nitratidesulfovibrio vulgaris (strain DSM 19637 / Miyazaki F) (Desulfovibrio vulgaris)).